Reading from the N-terminus, the 290-residue chain is uncharacterized protein (290 aa).

The AB hydrolase-1 domain occupies 30–274 (PTILLLHGFP…YDTGHFALET (245 aa)). Residue His269 is part of the active site.

The protein belongs to the DmpD/TodF/XylF esterase family.

This is an uncharacterized protein from Saccharomyces cerevisiae (strain ATCC 204508 / S288c) (Baker's yeast).